The chain runs to 374 residues: MTLAYAPTAQTITIRNDWTKAEVEALFAMPFNDLLFNAQVVHRQHFNPNEVQVSTLLSIKTGACPEDCKYCPQSARYDTGLEKERLLEIEKVIQRAKEAKQVGSTRFCMGAAWRNPRDRDMPYILKMVEEVKSLGLETCMTLGMLTRDQAVALKQAGLDYYNHNLDTSPEYYGDIITTRTYEDRLNTLENVRAAGMNVCSGGIVGMGETVSDRASMLVQLANLPEQPQSVPINMLVKVKGTPLDSVEDLDYFEFIRTIAVARIMMPKSHVRLSAGREAMNEQMQAMCFMAGANSIFYGCKLLTTSNPDTHEDVMLFKKLGINTERTRDYSDEAHQQVLEEEIAQQQEQAEGSNDLFIDATKPKVAAKQQHATEA.

The Radical SAM core domain maps to 49–276; it reads NEVQVSTLLS…KSHVRLSAGR (228 aa). Residues Cys-64, Cys-68, and Cys-71 each contribute to the [4Fe-4S] cluster site. Cys-108, Cys-139, Cys-199, and Arg-271 together coordinate [2Fe-2S] cluster. The disordered stretch occupies residues 344–374; sequence QQQEQAEGSNDLFIDATKPKVAAKQQHATEA.

The protein belongs to the radical SAM superfamily. Biotin synthase family. As to quaternary structure, homodimer. [4Fe-4S] cluster is required as a cofactor. The cofactor is [2Fe-2S] cluster.

The catalysed reaction is (4R,5S)-dethiobiotin + (sulfur carrier)-SH + 2 reduced [2Fe-2S]-[ferredoxin] + 2 S-adenosyl-L-methionine = (sulfur carrier)-H + biotin + 2 5'-deoxyadenosine + 2 L-methionine + 2 oxidized [2Fe-2S]-[ferredoxin]. The protein operates within cofactor biosynthesis; biotin biosynthesis; biotin from 7,8-diaminononanoate: step 2/2. Functionally, catalyzes the conversion of dethiobiotin (DTB) to biotin by the insertion of a sulfur atom into dethiobiotin via a radical-based mechanism. The protein is Biotin synthase of Alteromonas mediterranea (strain DSM 17117 / CIP 110805 / LMG 28347 / Deep ecotype).